The following is a 294-amino-acid chain: 2-dehydro-3-deoxy-phosphogluconate/2-dehydro-3-deoxy-6-phosphogalactonate aldolase (294 aa).

Residues 43 to 44, 130 to 132, and 155 to 157 contribute to the substrate site; these read TT, YNY, and KDT. The active-site Schiff-base intermediate with substrate is Lys155.

Belongs to the DapA family. KDPG aldolase subfamily. As to quaternary structure, homotetramer; dimer of dimers.

The catalysed reaction is 2-dehydro-3-deoxy-6-phospho-D-gluconate = D-glyceraldehyde 3-phosphate + pyruvate. The enzyme catalyses 2-dehydro-3-deoxy-6-phospho-D-galactonate = D-glyceraldehyde 3-phosphate + pyruvate. It functions in the pathway carbohydrate acid metabolism; 2-dehydro-3-deoxy-D-gluconate degradation; D-glyceraldehyde 3-phosphate and pyruvate from 2-dehydro-3-deoxy-D-gluconate: step 2/2. Involved in the degradation of glucose and galactose via the Entner-Doudoroff pathway. Catalyzes the reversible cleavage of 2-keto-3-deoxy-6-phosphogluconate (KDPG) and 2-keto-3-deoxygluconate (KDG) forming pyruvate and glyceraldehyde 3-phosphate or glyceraldehyde, respectively. It is also able to catalyze the reversible cleavage of 2-keto-3-deoxy-6-phosphogalactonate (KDPGal) and 2-keto-3-deoxygalactonate (KDGal). It is equally active with both D- and L-glyceraldehyde. This Saccharolobus solfataricus (Sulfolobus solfataricus) protein is 2-dehydro-3-deoxy-phosphogluconate/2-dehydro-3-deoxy-6-phosphogalactonate aldolase.